The following is a 563-amino-acid chain: MLLPAPALRRALLSRPWTGAGLRWKHTSSLKVANEPVLAFTQGSPERDALQKALKDLKGRMEAIPCVVGDEEVWTSDVQYQVSPFNHGHKVAKFCYADKSLLNKAIEAALAARKEWDLKPIADRAQIFLKAADMLSGPRRAEILAKTMVGQGKTVIQAEIDAAAELIDFFRFNAKYAVELEGQQPISVPPSTNSTVYRGLEGFVAAISPFNFTAIGGNLAGAPALMGNVVLWKPSDTAMLASYAVYRILREAGLPPNIIQFVPADGPLFGDTVTSSEHLCGINFTGSVPTFKHLWKQVAQNLDRFHTFPRLAGECGGKNFHFVHRSADVESVVSGTLRSAFEYGGQKCSACSRLYVPHSLWPQIKGRLLEEHSRIKVGDPAEDFGTFFSAVIDAKSFARIKKWLEHARSSPSLTILAGGKCDDSVGYFVEPCIVESKDPQEPIMKEEIFGPVLSVYVYPDDKYKETLQLVDSTTSYGLTGAVFSQDKDVVQEATKVLRNAAGNFYINDKSTGSIVGQQPFGGARASGTNDKPGGPHYILRWTSPQVIKETHKPLGDWSYAYMQ.

A mitochondrion-targeting transit peptide spans 1-24; the sequence is MLLPAPALRRALLSRPWTGAGLRW. K31 carries the post-translational modification N6-succinyllysine. A Phosphoserine modification is found at S44. At K52 the chain carries N6-acetyllysine. N6-acetyllysine; alternate occurs at positions 93, 99, 114, 130, and 175. 5 positions are modified to N6-succinyllysine; alternate: K93, K99, K114, K130, and K175. NAD(+)-binding positions include S208, K233, and 286–290; that span reads GSVPT. The active-site Proton acceptor is the E314. Position 318 is an N6-acetyllysine (K318). N6-succinyllysine is present on K347. C348 functions as the Nucleophile in the catalytic mechanism. Residues K365 and K376 each carry the N6-acetyllysine modification. K395 carries the post-translational modification N6-succinyllysine. E447 serves as a coordination point for NAD(+). N6-acetyllysine is present on K462. At K509 the chain carries N6-acetyllysine; alternate. An N6-succinyllysine; alternate modification is found at K509. A substrate-binding site is contributed by S513. 2 positions are modified to N6-acetyllysine: K531 and K552.

Belongs to the aldehyde dehydrogenase family. Homodimer. As to expression, highest expression is found in liver followed by skeletal muscle, kidney, heart, brain, placenta, lung and pancreas.

Its subcellular location is the mitochondrion matrix. It catalyses the reaction L-glutamate 5-semialdehyde + NAD(+) + H2O = L-glutamate + NADH + 2 H(+). It functions in the pathway amino-acid degradation; L-proline degradation into L-glutamate; L-glutamate from L-proline: step 2/2. Functionally, irreversible conversion of delta-1-pyrroline-5-carboxylate (P5C), derived either from proline or ornithine, to glutamate. This is a necessary step in the pathway interconnecting the urea and tricarboxylic acid cycles. The preferred substrate is glutamic gamma-semialdehyde, other substrates include succinic, glutaric and adipic semialdehydes. In Homo sapiens (Human), this protein is Delta-1-pyrroline-5-carboxylate dehydrogenase, mitochondrial (ALDH4A1).